Here is a 113-residue protein sequence, read N- to C-terminus: P antigen family member 3 (113 aa).

The span at 1 to 12 shows a compositional bias: basic residues; sequence MSGHQRTRSRSR. Disordered regions lie at residues 1-61 and 78-113; these read MSGH…EGAL and SKTG…QPSV.

This sequence belongs to the GAGE family.

The sequence is that of P antigen family member 3 (PAGE3) from Homo sapiens (Human).